The primary structure comprises 225 residues: NAD(P)H-quinone oxidoreductase subunit K, chloroplastic (225 aa).

[4Fe-4S] cluster contacts are provided by Cys-43, Cys-44, Cys-108, and Cys-139.

The protein belongs to the complex I 20 kDa subunit family. NDH is composed of at least 16 different subunits, 5 of which are encoded in the nucleus. [4Fe-4S] cluster serves as cofactor.

The protein localises to the plastid. It is found in the chloroplast thylakoid membrane. It carries out the reaction a plastoquinone + NADH + (n+1) H(+)(in) = a plastoquinol + NAD(+) + n H(+)(out). It catalyses the reaction a plastoquinone + NADPH + (n+1) H(+)(in) = a plastoquinol + NADP(+) + n H(+)(out). Functionally, NDH shuttles electrons from NAD(P)H:plastoquinone, via FMN and iron-sulfur (Fe-S) centers, to quinones in the photosynthetic chain and possibly in a chloroplast respiratory chain. The immediate electron acceptor for the enzyme in this species is believed to be plastoquinone. Couples the redox reaction to proton translocation, and thus conserves the redox energy in a proton gradient. The sequence is that of NAD(P)H-quinone oxidoreductase subunit K, chloroplastic from Capsella bursa-pastoris (Shepherd's purse).